We begin with the raw amino-acid sequence, 82 residues long: Small ribosomal subunit protein bS20 (82 aa).

The tract at residues 1-29 (MPNIKSAKKDLRRSRAAAVRNRAQRSALR) is disordered. Residues 16 to 29 (AAAVRNRAQRSALR) are compositionally biased toward low complexity.

The protein belongs to the bacterial ribosomal protein bS20 family.

In terms of biological role, binds directly to 16S ribosomal RNA. The protein is Small ribosomal subunit protein bS20 of Gemmatimonas aurantiaca (strain DSM 14586 / JCM 11422 / NBRC 100505 / T-27).